The chain runs to 109 residues: UPF0154 protein UPA3_0273 (109 aa).

The helical transmembrane segment at 42 to 62 threads the bilayer; that stretch reads VGLGIGIVLFLIAGLIIGYFI.

This sequence belongs to the UPF0154 family.

It is found in the cell membrane. This chain is UPF0154 protein UPA3_0273, found in Ureaplasma parvum serovar 3 (strain ATCC 27815 / 27 / NCTC 11736).